Here is a 165-residue protein sequence, read N- to C-terminus: Phosphopantetheine adenylyltransferase (165 aa).

Threonine 9 is a substrate binding site. ATP-binding positions include threonine 9–phenylalanine 10 and histidine 17. Substrate contacts are provided by lysine 41, leucine 73, and arginine 87. ATP-binding positions include glycine 88–arginine 90, glutamate 98, and leucine 123–arginine 129.

This sequence belongs to the bacterial CoaD family. As to quaternary structure, homohexamer. Mg(2+) serves as cofactor.

Its subcellular location is the cytoplasm. The catalysed reaction is (R)-4'-phosphopantetheine + ATP + H(+) = 3'-dephospho-CoA + diphosphate. The protein operates within cofactor biosynthesis; coenzyme A biosynthesis; CoA from (R)-pantothenate: step 4/5. Functionally, reversibly transfers an adenylyl group from ATP to 4'-phosphopantetheine, yielding dephospho-CoA (dPCoA) and pyrophosphate. The sequence is that of Phosphopantetheine adenylyltransferase from Rhizorhabdus wittichii (strain DSM 6014 / CCUG 31198 / JCM 15750 / NBRC 105917 / EY 4224 / RW1) (Sphingomonas wittichii).